The sequence spans 228 residues: UPF0328 protein ECU07_0040 (228 aa).

Belongs to the UPF0328 family.

The chain is UPF0328 protein ECU07_0040 from Encephalitozoon cuniculi (strain GB-M1) (Microsporidian parasite).